The sequence spans 212 residues: Peptide methionine sulfoxide reductase MsrA (212 aa).

Cysteine 52 is a catalytic residue.

It belongs to the MsrA Met sulfoxide reductase family.

The catalysed reaction is L-methionyl-[protein] + [thioredoxin]-disulfide + H2O = L-methionyl-(S)-S-oxide-[protein] + [thioredoxin]-dithiol. It carries out the reaction [thioredoxin]-disulfide + L-methionine + H2O = L-methionine (S)-S-oxide + [thioredoxin]-dithiol. Functionally, has an important function as a repair enzyme for proteins that have been inactivated by oxidation. Catalyzes the reversible oxidation-reduction of methionine sulfoxide in proteins to methionine. In Escherichia coli O6:K15:H31 (strain 536 / UPEC), this protein is Peptide methionine sulfoxide reductase MsrA.